We begin with the raw amino-acid sequence, 181 residues long: Ribonuclease HII (181 aa).

In terms of domain architecture, RNase H type-2 spans 1–181 (MICGIDEVGR…SLHRRNFKLI (181 aa)). A divalent metal cation-binding residues include Asp-6, Glu-7, and Asp-98.

It belongs to the RNase HII family. Requires Mn(2+) as cofactor. The cofactor is Mg(2+).

The protein resides in the cytoplasm. The catalysed reaction is Endonucleolytic cleavage to 5'-phosphomonoester.. Endonuclease that specifically degrades the RNA of RNA-DNA hybrids. This Borrelia garinii subsp. bavariensis (strain ATCC BAA-2496 / DSM 23469 / PBi) (Borreliella bavariensis) protein is Ribonuclease HII.